Reading from the N-terminus, the 409-residue chain is Evolutionarily conserved signaling intermediate in Toll pathway, mitochondrial (409 aa).

The transit peptide at 1–26 (MLRRAQCLLRLHGNGGHSLVSRFRNY) directs the protein to the mitochondrion. 2 disordered regions span residues 27 to 53 (ATDE…NLPA) and 383 to 409 (EEIE…SRQK). Positions 400–409 (QDEHISSRQK) are enriched in basic and acidic residues.

Belongs to the ECSIT family. As to quaternary structure, interacts with Traf6. Associates with mitochondrial complex I assembly intermediates during its biogenesis.

It localises to the cytoplasm. The protein localises to the nucleus. It is found in the mitochondrion. As part of the MCIA complex, involved in the assembly of the mitochondrial complex I. Involved in the innate immune response; promotes the production of antibacterial peptides. This is Evolutionarily conserved signaling intermediate in Toll pathway, mitochondrial from Drosophila melanogaster (Fruit fly).